We begin with the raw amino-acid sequence, 510 residues long: NAD(P)H-quinone oxidoreductase subunit 2 A, chloroplastic (510 aa).

Transmembrane regions (helical) follow at residues 24 to 44 (LLLF…GLIL), 57 to 77 (IPWL…ALLF), 99 to 119 (IFQF…VEYI), 124 to 144 (MAIT…MFLC), 149 to 169 (LITI…LSGY), 183 to 203 (YLLM…WLYG), 227 to 247 (PGIS…LSPA), 295 to 315 (WHLL…LIAI), 323 to 343 (MLAY…IVGD), 354 to 374 (YMLF…SFGL), 395 to 415 (ALSL…AGFF), 418 to 438 (LHLF…IGLL), and 484 to 504 (MIVC…IIAI).

Belongs to the complex I subunit 2 family. NDH is composed of at least 16 different subunits, 5 of which are encoded in the nucleus.

The protein localises to the plastid. It localises to the chloroplast thylakoid membrane. It carries out the reaction a plastoquinone + NADH + (n+1) H(+)(in) = a plastoquinol + NAD(+) + n H(+)(out). It catalyses the reaction a plastoquinone + NADPH + (n+1) H(+)(in) = a plastoquinol + NADP(+) + n H(+)(out). NDH shuttles electrons from NAD(P)H:plastoquinone, via FMN and iron-sulfur (Fe-S) centers, to quinones in the photosynthetic chain and possibly in a chloroplast respiratory chain. The immediate electron acceptor for the enzyme in this species is believed to be plastoquinone. Couples the redox reaction to proton translocation, and thus conserves the redox energy in a proton gradient. This is NAD(P)H-quinone oxidoreductase subunit 2 A, chloroplastic from Vitis vinifera (Grape).